The primary structure comprises 473 residues: MKTQQSFHVVAGFVCFPMSKTSQSRCYSTLRDFLIPPSKQKFVPSSGTYPKGFLAAGAHAGVKESNTQFRDVALICSKTPCSAAAVFTTNKFQAAPVQVSKQVLEAREGADITGVVINSGCANAVTGKGGLEDAKSMSAKVDECNGTPSTSSKGPSTLVMSTGVIGRRLPIKRILNAIPVAHSNLSSTHKAWLNAARSICTTDTFPKLLSRTFTLPSSPNHTYRIAGMTKGAGMIHPNMATLLGILCTDVPISPAALKPLLSHAVSRSFNCISIDGDTSTNDTVALLANGAAGGQTITTPSSPNYAAMQTVLTSFAQSLAQLVVRDGEGATKFVTVRVLNSPSQADARAIASTIARSPLVKTALYGRDANWGRILCAIGYTQGIQVGTVVPERTSVSFKPVDGSEELKLLVNGEPQMVNEERAARILQDEDLEIVVDLGGGEKGGEGMAGEEGIYWFCDFSHEYVTINADYRT.

Positions 201, 230, 241, 328, 468, and 473 each coordinate substrate. Residue Thr-241 is the Nucleophile of the active site.

The protein belongs to the ArgJ family. As to quaternary structure, heterodimer of an alpha and a beta chain. The alpha and beta chains are autoproteolytically processed from a single precursor protein within the mitochondrion.

It localises to the mitochondrion matrix. The enzyme catalyses N(2)-acetyl-L-ornithine + L-glutamate = N-acetyl-L-glutamate + L-ornithine. It carries out the reaction L-glutamate + acetyl-CoA = N-acetyl-L-glutamate + CoA + H(+). It functions in the pathway amino-acid biosynthesis; L-arginine biosynthesis; L-ornithine and N-acetyl-L-glutamate from L-glutamate and N(2)-acetyl-L-ornithine (cyclic): step 1/1. It participates in amino-acid biosynthesis; L-arginine biosynthesis; N(2)-acetyl-L-ornithine from L-glutamate: step 1/4. Catalyzes two activities which are involved in the cyclic version of arginine biosynthesis: the synthesis of acetylglutamate from glutamate and acetyl-CoA, and of ornithine by transacetylation between acetylornithine and glutamate. The chain is Arginine biosynthesis bifunctional protein ArgJ, mitochondrial from Paracoccidioides lutzii (strain ATCC MYA-826 / Pb01) (Paracoccidioides brasiliensis).